A 247-amino-acid polypeptide reads, in one-letter code: uncharacterized protein (247 aa).

2 consecutive transmembrane segments (helical) span residues 9–29 (IIAICLIFLSILVYSIHFLIF) and 37–57 (SYFLLHLAFVPIEVLLVSLII).

The protein localises to the cell membrane. This is an uncharacterized protein from Methanocaldococcus jannaschii (strain ATCC 43067 / DSM 2661 / JAL-1 / JCM 10045 / NBRC 100440) (Methanococcus jannaschii).